The chain runs to 223 residues: ATP-dependent Clp protease proteolytic subunit 2 (223 aa).

Residue Ser118 is the Nucleophile of the active site. The active site involves His143.

It belongs to the peptidase S14 family. In terms of assembly, fourteen ClpP subunits assemble into 2 heptameric rings which stack back to back to give a disk-like structure with a central cavity, resembling the structure of eukaryotic proteasomes.

It is found in the cytoplasm. It catalyses the reaction Hydrolysis of proteins to small peptides in the presence of ATP and magnesium. alpha-casein is the usual test substrate. In the absence of ATP, only oligopeptides shorter than five residues are hydrolyzed (such as succinyl-Leu-Tyr-|-NHMec, and Leu-Tyr-Leu-|-Tyr-Trp, in which cleavage of the -Tyr-|-Leu- and -Tyr-|-Trp bonds also occurs).. Its function is as follows. Cleaves peptides in various proteins in a process that requires ATP hydrolysis. Has a chymotrypsin-like activity. Plays a major role in the degradation of misfolded proteins. The sequence is that of ATP-dependent Clp protease proteolytic subunit 2 from Leifsonia xyli subsp. xyli (strain CTCB07).